Reading from the N-terminus, the 110-residue chain is Ribonuclease P protein component 4 (110 aa).

Zn(2+) contacts are provided by Cys-65, Cys-68, Cys-94, and Cys-97.

The protein belongs to the eukaryotic/archaeal RNase P protein component 4 family. As to quaternary structure, consists of a catalytic RNA component and at least 4-5 protein subunits. It depends on Zn(2+) as a cofactor.

Its subcellular location is the cytoplasm. It catalyses the reaction Endonucleolytic cleavage of RNA, removing 5'-extranucleotides from tRNA precursor.. Functionally, part of ribonuclease P, a protein complex that generates mature tRNA molecules by cleaving their 5'-ends. This chain is Ribonuclease P protein component 4, found in Methanococcus maripaludis (strain C7 / ATCC BAA-1331).